A 52-amino-acid chain; its full sequence is LIRRPFFSWLAPSRIFDQIFGEHLPESELLPVSPSFSPFLMRSPILRMPSWL.

This sequence belongs to the small heat shock protein (HSP20) family. In terms of assembly, homodimer. Aggregates with homologous proteins, including alpha-A-crystallin and the small heat shock protein HSPB1, to form large heteromeric complexes.

Its function is as follows. May contribute to the transparency and refractive index of the lens. The protein is Alpha-crystallin B chain (CRYAB) of Turdus merula (Common blackbird).